The sequence spans 371 residues: Vasopressin V2 receptor (371 aa).

Over 1–38 the chain is Extracellular; that stretch reads MLLVSTVSAVPGLFSPPSSPSNSSQEELLDDRDPLLVR. An N-linked (GlcNAc...) asparagine glycan is attached at Asn22. A helical transmembrane segment spans residues 39–63; the sequence is AELALLSTIFVAVALSNGLVLGALI. The Cytoplasmic segment spans residues 64 to 77; sequence RRGRRGRWAPMHVF. A helical membrane pass occupies residues 78–98; sequence ISHLCLADLAVALFQVLPQLA. Topologically, residues 99 to 113 are extracellular; sequence WDATDRFHGPDALCR. The helical transmembrane segment at 114–135 threads the bilayer; that stretch reads AVKYLQMVGMYASSYMILAMTL. Residues 136 to 159 lie on the Cytoplasmic side of the membrane; that stretch reads DRHRAICRPMLAYRHGGGARWNRP. Residues 160–180 form a helical membrane-spanning segment; the sequence is VLVAWAFSLLLSLPQLFIFAQ. The Extracellular segment spans residues 181–200; the sequence is RDVGNGSGVFDCWARFAEPW. An N-linked (GlcNAc...) asparagine glycan is attached at Asn185. Residues 201–220 traverse the membrane as a helical segment; sequence GLRAYVTWIALMVFVAPALG. Residues 221–271 are Cytoplasmic-facing; that stretch reads IAACQVLIFREIHASLVPGPSERAGRRRRGRRTGSPSEGAHVSAAMAKTVR. Positions 240–260 are disordered; it reads PSERAGRRRRGRRTGSPSEGA. A helical transmembrane segment spans residues 272–293; the sequence is MTLVIVIVYVLCWAPFFLVQLW. The Extracellular segment spans residues 294–308; sequence AAWDPEAPLERPPFV. The chain crosses the membrane as a helical span at residues 309–328; sequence LLMLLASLNSCTNPWIYASF. At 329-371 the chain is on the cytoplasmic side; it reads SSSVSSELRSLLCCAQRHTTHSLGPQDESCATASSSLMKDTPS. Residues Cys341 and Cys342 are each lipidated (S-palmitoyl cysteine). Positions 349–371 are disordered; sequence HSLGPQDESCATASSSLMKDTPS. The segment covering 357–371 has biased composition (polar residues); the sequence is SCATASSSLMKDTPS.

The protein belongs to the G-protein coupled receptor 1 family. Vasopressin/oxytocin receptor subfamily. As to quaternary structure, interacts with ARRDC4. Identified in a complex containing at least ARRDC4, V2R and HGS. Interacts with TMEM147. In terms of tissue distribution, kidney.

It localises to the cell membrane. In terms of biological role, receptor for arginine vasopressin. The activity of this receptor is mediated by G proteins which activate adenylate cyclase. Involved in renal water reabsorption. This Rattus norvegicus (Rat) protein is Vasopressin V2 receptor (Avpr2).